The primary structure comprises 343 residues: Nuclease EXOG, mitochondrial (343 aa).

Histidine 121 serves as the catalytic Proton acceptor. Asparagine 152 contributes to the a divalent metal cation binding site.

The protein belongs to the DNA/RNA non-specific endonuclease family. As to quaternary structure, homodimer. It depends on a divalent metal cation as a cofactor.

The protein localises to the mitochondrion inner membrane. Functionally, endo/exonuclease with nicking activity towards supercoiled DNA, a preference for single-stranded DNA and 5'-3' exonuclease activity. This chain is Nuclease EXOG, mitochondrial (exog), found in Danio rerio (Zebrafish).